A 226-amino-acid chain; its full sequence is Cytidylate kinase (226 aa).

12–20 contributes to the ATP binding site; it reads GPSGAGKGT.

Belongs to the cytidylate kinase family. Type 1 subfamily.

The protein localises to the cytoplasm. It carries out the reaction CMP + ATP = CDP + ADP. The enzyme catalyses dCMP + ATP = dCDP + ADP. The protein is Cytidylate kinase of Colwellia psychrerythraea (strain 34H / ATCC BAA-681) (Vibrio psychroerythus).